Here is a 137-residue protein sequence, read N- to C-terminus: Proline-rich protein 13 (137 aa).

2 disordered regions span residues 26–54 and 94–137; these read PPPLNPAFPPGPCPPGIPQGNPAFPPCRP and VGPG…SDSD. Residues 103–124 show a composition bias toward basic residues; it reads KTRKKMKKAHKKSHKHHKHGKH. The span at 125-137 shows a compositional bias: low complexity; the sequence is SSSSSSSSSSDSD.

The protein localises to the nucleus. Functionally, negatively regulates TSP1 expression at the level of transcription. This down-regulation was shown to reduce taxane-induced apoptosis. This chain is Proline-rich protein 13 (Prr13), found in Mus musculus (Mouse).